A 668-amino-acid chain; its full sequence is MNKFNLVTKYAPAGDQPQAIQSLVNGINTGLQHQVLLGVTGSGKTYTMANVIQQTQKPCLILAHNKTLAAQLYSEFKQYFPDNAVEYFVSYYDYYQPEAYIAASDTYIEKDSSVNEHIEQMRLSATKAILERNDVIIVATVSAIYGLGDPEQYMQMLLHLKVGEELGLKKAQTKLVEMQYSRNDMDFSRGSFRVRGEVLDIFPADSEKDAIRVEFFDDEIEAISVIDSLTSKKLKSLHRATIFPSTHYVASKERKEIVIEDIKKELKERVKYFEKEGKLLEAQRIEQRTKYDIEMIQELGYCTGIENYSRLLSGRAPGYPPPTLIDYLPENALVIVDESHVTLPQFGGMYKGDLSRKSNLVNYGFRLPSALDNRPLKFNEFESLLPQTIYVSATPANYELEKSQNTVQQVIRPTGLLDPEVFVRPVAIQVEDALSEINKAIAKEERVLITTLTKKMVENLTEYLSEHGVNVRYLHSDIDTVERVQIIHDLRHGVFDVLVGINLLREGLDMPEVGVLLIFDADKEGFLRSEKSLIQTIGRVARNQNGRAILYADVVTKSMQKAMDETLRRRKLQDEYNQKHNIVPKTIIKNIDDMLDSSPEMQKRAYKNNLRLKVDDVDVSAILGMTEATKVIKALEKRMRAYAKELEFEKATTIRDKITEVKQKFINL.

In terms of domain architecture, Helicase ATP-binding spans 25-413 (NGINTGLQHQ…QNTVQQVIRP (389 aa)). 38-45 (GVTGSGKT) contacts ATP. Residues 91-114 (YYDYYQPEAYIAASDTYIEKDSSV) carry the Beta-hairpin motif. The Helicase C-terminal domain occupies 429-595 (QVEDALSEIN…TIIKNIDDML (167 aa)). Residues 629 to 664 (TKVIKALEKRMRAYAKELEFEKATTIRDKITEVKQK) enclose the UVR domain.

The protein belongs to the UvrB family. As to quaternary structure, forms a heterotetramer with UvrA during the search for lesions. Interacts with UvrC in an incision complex.

The protein resides in the cytoplasm. In terms of biological role, the UvrABC repair system catalyzes the recognition and processing of DNA lesions. A damage recognition complex composed of 2 UvrA and 2 UvrB subunits scans DNA for abnormalities. Upon binding of the UvrA(2)B(2) complex to a putative damaged site, the DNA wraps around one UvrB monomer. DNA wrap is dependent on ATP binding by UvrB and probably causes local melting of the DNA helix, facilitating insertion of UvrB beta-hairpin between the DNA strands. Then UvrB probes one DNA strand for the presence of a lesion. If a lesion is found the UvrA subunits dissociate and the UvrB-DNA preincision complex is formed. This complex is subsequently bound by UvrC and the second UvrB is released. If no lesion is found, the DNA wraps around the other UvrB subunit that will check the other stand for damage. The chain is UvrABC system protein B from Francisella tularensis subsp. tularensis (strain SCHU S4 / Schu 4).